A 393-amino-acid polypeptide reads, in one-letter code: Probable acetyl-CoA acyltransferase (393 aa).

Cysteine 88 functions as the Acyl-thioester intermediate in the catalytic mechanism. Catalysis depends on proton acceptor residues histidine 349 and cysteine 378.

It belongs to the thiolase-like superfamily. Thiolase family.

The protein resides in the cytoplasm. It catalyses the reaction 2 acetyl-CoA = acetoacetyl-CoA + CoA. This Staphylococcus aureus (strain NCTC 8325 / PS 47) protein is Probable acetyl-CoA acyltransferase.